Here is a 412-residue protein sequence, read N- to C-terminus: Putative competence-damage inducible protein (412 aa).

It belongs to the CinA family.

The polypeptide is Putative competence-damage inducible protein (Clostridium perfringens (strain ATCC 13124 / DSM 756 / JCM 1290 / NCIMB 6125 / NCTC 8237 / Type A)).